A 192-amino-acid chain; its full sequence is MKLVVGLGNPGEEYARTRHNVGFVVADRLAQLAGASFSAKKFAAELAEARLGPERVWIMKPQTYMNHSGEAVGAALRFWKLGLDDLVVVHDDLELDPYRVQLKVGGGHGGHNGVKSVNAHVGSPEYARVRVGVGRPPPRMDPADYVLGKFAKGEDAELDLCVEQAVEATRLAVELGAARAMNQVNRRSRAAE.

Tyrosine 14 is a binding site for tRNA. Histidine 19 functions as the Proton acceptor in the catalytic mechanism. Residues tyrosine 64, asparagine 66, and asparagine 112 each contribute to the tRNA site.

The protein belongs to the PTH family. As to quaternary structure, monomer.

The protein localises to the cytoplasm. It catalyses the reaction an N-acyl-L-alpha-aminoacyl-tRNA + H2O = an N-acyl-L-amino acid + a tRNA + H(+). Hydrolyzes ribosome-free peptidyl-tRNAs (with 1 or more amino acids incorporated), which drop off the ribosome during protein synthesis, or as a result of ribosome stalling. Its function is as follows. Catalyzes the release of premature peptidyl moieties from peptidyl-tRNA molecules trapped in stalled 50S ribosomal subunits, and thus maintains levels of free tRNAs and 50S ribosomes. This chain is Peptidyl-tRNA hydrolase, found in Anaeromyxobacter sp. (strain K).